Here is a 169-residue protein sequence, read N- to C-terminus: Desumoylating isopeptidase 1 (169 aa).

The PPPDE domain occupies 8–150 (HLVRLYVYDM…LGQALRPLLD (143 aa)). Residue H39 is part of the active site. The Nuclear export signal 1 motif lies at 84–92 (IFLEYLSSL). Residue C109 is part of the active site. The short motif at 140 to 154 (PLGQALRPLLDSVQI) is the Nuclear export signal 2 element.

This sequence belongs to the DeSI family. Homodimer.

It localises to the cytoplasm. It is found in the nucleus. It catalyses the reaction S-hexadecanoyl-L-cysteinyl-[protein] + H2O = L-cysteinyl-[protein] + hexadecanoate + H(+). In terms of biological role, protease which deconjugates SUMO1, SUMO2 and SUMO3 from some substrate proteins. Has isopeptidase but not SUMO-processing activity. Collaborates with ubqln4 in the export of ubiquitinated proteins from the nucleus to the cytoplasm. Exhibits palmitoyl protein thioesterase (S-depalmitoylation) activity towards synthetic substrates 4-methylumbelliferyl-6-S-palmitoyl-beta-D-glucopyranoside and S-depalmitoylation probe 5 (DPP-5). This chain is Desumoylating isopeptidase 1, found in Xenopus laevis (African clawed frog).